The primary structure comprises 360 residues: Aminomethyltransferase (360 aa).

Belongs to the GcvT family. The glycine cleavage system is composed of four proteins: P, T, L and H.

The enzyme catalyses N(6)-[(R)-S(8)-aminomethyldihydrolipoyl]-L-lysyl-[protein] + (6S)-5,6,7,8-tetrahydrofolate = N(6)-[(R)-dihydrolipoyl]-L-lysyl-[protein] + (6R)-5,10-methylene-5,6,7,8-tetrahydrofolate + NH4(+). The glycine cleavage system catalyzes the degradation of glycine. The protein is Aminomethyltransferase of Legionella pneumophila subsp. pneumophila (strain Philadelphia 1 / ATCC 33152 / DSM 7513).